The chain runs to 219 residues: uncharacterized protein (219 aa).

This is an uncharacterized protein from Treponema pallidum (strain Nichols).